Consider the following 444-residue polypeptide: Crh-like protein 3 (444 aa).

The first 19 residues, 1–19 (MVGKSTLLSVLASASVAFA), serve as a signal peptide directing secretion. Cys27 and Cys34 form a disulfide bridge. Positions 57–271 (SLESCVPEPV…WAGGEIDWNS (215 aa)) constitute a GH16 domain. Glu157 (nucleophile) is an active-site residue. The Proton donor role is filled by Glu161. Residue Glu161 coordinates chitin. Asn187 and Asn228 each carry an N-linked (GlcNAc...) asparagine glycan. Chitin contacts are provided by Trp248 and Thr259. Asn315, Asn323, Asn336, and Asn371 each carry an N-linked (GlcNAc...) asparagine glycan. Ser415 carries the GPI-anchor amidated serine lipid modification. A propeptide spans 416–444 (ADSLVANQERVLKGSLFAGIVAVVAMMAL) (removed in mature form).

Belongs to the glycosyl hydrolase 16 family. CRH1 subfamily. Forms homodimers as well as heterodimers with other crh protein members crh1 and crh2. Dimerization may be necessary for the transglycosylation activity.

It localises to the cell membrane. The enzyme catalyses Random endo-hydrolysis of N-acetyl-beta-D-glucosaminide (1-&gt;4)-beta-linkages in chitin and chitodextrins.. In terms of biological role, dual chitinase/transglycosylase that plays a role in cell wall architecture. Chitinase and transglycosylase activities are coupled. Required for the polysaccharide cross-linking at the septa and the cell wall. More specifically, transfers chitin to 1,6-beta-glucan in the cell wall. The chain is Crh-like protein 3 from Botryotinia fuckeliana (strain B05.10) (Noble rot fungus).